Consider the following 93-residue polypeptide: Putative regulatory protein LA_2599 (93 aa).

This sequence belongs to the RemA family.

In Leptospira interrogans serogroup Icterohaemorrhagiae serovar Lai (strain 56601), this protein is Putative regulatory protein LA_2599.